The primary structure comprises 487 residues: Cyclic AMP-dependent transcription factor ATF-2 (487 aa).

A C2H2-type zinc finger spans residues phenylalanine 7–histidine 31. A Phosphothreonine; by PKC/PRKCH modification is found at threonine 34. Position 44 is a phosphoserine (serine 44). Threonine 51 is modified (phosphothreonine; by MAPK11 and MAPK14). Threonine 53 is subject to Phosphothreonine; by MAPK1, MAPK3, MAPK11, MAPK12, MAPK14 and PLK3. Threonine 55 is subject to Phosphothreonine; by VRK1. Serine 72 and serine 94 each carry phosphoserine. Threonine 98 carries the phosphothreonine modification. The residue at position 103 (serine 103) is a Phosphoserine; by PKC/PRKCA and PKC/PRKCB. 2 disordered regions span residues glutamate 106–glutamine 137 and proline 241–arginine 355. Serine 118 is subject to Phosphoserine. Residues leucine 264–aspartate 275 are compositionally biased toward polar residues. The tract at residues lysine 278–glycine 281 is essential for its histone acetyltransferase activity. A compositionally biased stretch (low complexity) spans proline 300–proline 316. At serine 310 the chain carries Phosphoserine. Serine 322 is subject to Phosphoserine; by PKC/PRKCA and PKC/PRKCB. Residues alanine 328–arginine 345 show a composition bias toward basic and acidic residues. A bZIP domain is found at aspartate 334–histidine 397. The interval lysine 336–lysine 356 is basic motif. An N6-acetyllysine modification is found at lysine 339. Serine 349 carries the phosphoserine; by PKC/PRKCA and PKC/PRKCB modification. N6-acetyllysine is present on lysine 356. The interval leucine 362–leucine 390 is leucine-zipper. Positions valine 387 to alanine 396 match the Nuclear export signal motif. The disordered stretch occupies residues lysine 407 to alanine 453. A phosphoserine mark is found at serine 424 and serine 428. Polar residues predominate over residues valine 425–histidine 436. The span at serine 437–serine 449 shows a compositional bias: low complexity. A phosphoserine; by ATM mark is found at serine 472 and serine 480.

This sequence belongs to the bZIP family. ATF subfamily. As to quaternary structure, binds DNA as a dimer and can form a homodimer in the absence of DNA. Can form a heterodimer with JUN. Heterodimerization is essential for its transcriptional activity. Interacts with SMAD3 and SMAD4. Interacts with the HK1/VDAC1 complex. Interacts with NBN, MRE11, XPO1, KAT5 and CUL3. Binds through its N-terminal region to UTF1 which acts as a coactivator of ATF2 transcriptional activity. Phosphorylation of Thr-51 by MAPK14 and MAPK11, and at Thr-53 by MAPK1/ERK2, MAPK3/ERK1, MAPK11, MAPK12 and MAPK14 in response to external stimulus like insulin causes increased transcriptional activity. Phosphorylated by PLK3 following hyperosmotic stress. Also phosphorylated and activated by JNK and CaMK4. ATM-mediated phosphorylation at Ser-472 and Ser-480 stimulates its function in DNA damage response. Phosphorylation at Ser-44, Thr-55 and Ser-103 activates its transcriptional activity. Phosphorylation at Thr-51 or Thr-53 enhances acetylation of histones H2B and H4.

The protein resides in the nucleus. The protein localises to the cytoplasm. It is found in the mitochondrion outer membrane. In terms of biological role, transcriptional activator which regulates the transcription of various genes, including those involved in anti-apoptosis, cell growth, and DNA damage response. Dependent on its binding partner, binds to CRE (cAMP response element) consensus sequences (5'-TGACGTCA-3') or to AP-1 (activator protein 1) consensus sequences (5'-TGACTCA-3'). In the nucleus, contributes to global transcription and the DNA damage response, in addition to specific transcriptional activities that are related to cell development, proliferation and death. In the cytoplasm, interacts with and perturbs HK1- and VDAC1-containing complexes at the mitochondrial outer membrane, thereby impairing mitochondrial membrane potential, inducing mitochondrial leakage and promoting cell death. The phosphorylated form (mediated by ATM) plays a role in the DNA damage response and is involved in the ionizing radiation (IR)-induced S phase checkpoint control and in the recruitment of the MRN complex into the IR-induced foci (IRIF). Exhibits histone acetyltransferase (HAT) activity which specifically acetylates histones H2B and H4 in vitro. In concert with CUL3 and RBX1, promotes the degradation of KAT5 thereby attenuating its ability to acetylate and activate ATM. Can elicit oncogenic or tumor suppressor activities depending on the tissue or cell type. This chain is Cyclic AMP-dependent transcription factor ATF-2 (Atf2), found in Mus musculus (Mouse).